The chain runs to 118 residues: Large ribosomal subunit protein bL20c (118 aa).

The protein belongs to the bacterial ribosomal protein bL20 family.

It localises to the plastid. The protein localises to the chloroplast. Its function is as follows. Binds directly to 23S ribosomal RNA and is necessary for the in vitro assembly process of the 50S ribosomal subunit. It is not involved in the protein synthesizing functions of that subunit. This Adiantum capillus-veneris (Maidenhair fern) protein is Large ribosomal subunit protein bL20c.